A 160-amino-acid polypeptide reads, in one-letter code: MKISVHAVGRMKAGPERELADRYFERFAKSGPAVGLEFAGITEIAEGRSQSAIERQRDEGSRLQAQLQPGTALILLDERGKSLSSQDLANRIGQLRDGGRKVLVLAIGGADGHDPPLRDQADLVLSFGALTWPHQLVRVMLGEQLYRVATILSGHPYHRA.

S-adenosyl-L-methionine is bound by residues Leu-76, Gly-108, and Phe-127–Trp-132.

It belongs to the RNA methyltransferase RlmH family. Homodimer.

It localises to the cytoplasm. It catalyses the reaction pseudouridine(1915) in 23S rRNA + S-adenosyl-L-methionine = N(3)-methylpseudouridine(1915) in 23S rRNA + S-adenosyl-L-homocysteine + H(+). Functionally, specifically methylates the pseudouridine at position 1915 (m3Psi1915) in 23S rRNA. The sequence is that of Ribosomal RNA large subunit methyltransferase H from Mesorhizobium japonicum (strain LMG 29417 / CECT 9101 / MAFF 303099) (Mesorhizobium loti (strain MAFF 303099)).